The chain runs to 249 residues: 14-3-3-like protein D (249 aa).

Belongs to the 14-3-3 family.

This is 14-3-3-like protein D from Nicotiana tabacum (Common tobacco).